The chain runs to 1258 residues: Cohesin subunit SA-1 (1258 aa).

The segment at 1–59 is disordered; the sequence is MITSELPVLQDSTNETTAHSDAGSELEETEVKGKRKRGRPGRPPSTNKKPRKSPGEKSR. Positions 10 to 19 are enriched in polar residues; the sequence is QDSTNETTAH. Phosphoserine is present on Ser24. Residues 296 to 381 form the SCD domain; the sequence is FVHRYRDAIA…NRFKDRIVSM (86 aa). 3 positions are modified to phosphoserine: Ser756, Ser1062, and Ser1065. The interval 1055–1148 is disordered; sequence GGEDDRMSVN…EHGSEPDFLH (94 aa). The span at 1062–1075 shows a compositional bias: low complexity; sequence SVNSGSSSSKTSSV. Basic residues predominate over residues 1076-1087; the sequence is RSKKGRPPLHRK. A Phosphoserine modification is found at Ser1093. The span at 1095 to 1106 shows a compositional bias: polar residues; sequence DNTWLNRTDTMI. Positions 1137–1146 are enriched in basic and acidic residues; sequence ESEHGSEPDF. Lys1161 is covalently cross-linked (Glycyl lysine isopeptide (Lys-Gly) (interchain with G-Cter in SUMO2)).

The protein belongs to the SCC3 family. As to quaternary structure, cohesin complexes are composed of a heterodimer between a SMC1 protein (SMC1A or SMC1B) and SMC3, which are attached via their hinge domain, and RAD21 which link them at their heads, and one STAG protein (STAG1, STAG2 or STAG3). In cohesin complexes, STAG1 is mutually exclusive with STAG2 and STAG3. Interacts directly with RAD21 in cohesin complex. The cohesin complex interacts with the cohesin loading complex subunits NIPBL/Scc2 (via HEAT repeats) and MAU2/Scc4. NIPBL directly contacts all members of the complex, RAD21, SMC1A/B, SMC3 and STAG1. In terms of processing, phosphorylated by PLK1. The large dissociation of cohesin from chromosome arms during prophase is partly due to its phosphorylation.

Its subcellular location is the nucleus. It localises to the chromosome. Functionally, component of cohesin complex, a complex required for the cohesion of sister chromatids after DNA replication. The cohesin complex apparently forms a large proteinaceous ring within which sister chromatids can be trapped. At anaphase, the complex is cleaved and dissociates from chromatin, allowing sister chromatids to segregate. The cohesin complex may also play a role in spindle pole assembly during mitosis. In Mus musculus (Mouse), this protein is Cohesin subunit SA-1 (Stag1).